We begin with the raw amino-acid sequence, 278 residues long: 4-deoxy-L-threo-5-hexosulose-uronate ketol-isomerase (278 aa).

The Zn(2+) site is built by His-196, His-198, Glu-203, and His-245.

The protein belongs to the KduI family. The cofactor is Zn(2+).

It carries out the reaction 5-dehydro-4-deoxy-D-glucuronate = 3-deoxy-D-glycero-2,5-hexodiulosonate. It functions in the pathway glycan metabolism; pectin degradation; 2-dehydro-3-deoxy-D-gluconate from pectin: step 4/5. Catalyzes the isomerization of 5-dehydro-4-deoxy-D-glucuronate to 3-deoxy-D-glycero-2,5-hexodiulosonate. The protein is 4-deoxy-L-threo-5-hexosulose-uronate ketol-isomerase of Salmonella paratyphi A (strain ATCC 9150 / SARB42).